A 275-amino-acid polypeptide reads, in one-letter code: Pyridoxal phosphate homeostasis protein (275 aa).

S6 is subject to Phosphoserine. N6-(pyridoxal phosphate)lysine is present on K47. Y69 bears the Phosphotyrosine mark. K125 bears the N6-succinyllysine mark. A phosphoserine mark is found at S226 and S244.

It belongs to the pyridoxal phosphate-binding protein YggS/PROSC family.

Pyridoxal 5'-phosphate (PLP)-binding protein, which may be involved in intracellular homeostatic regulation of pyridoxal 5'-phosphate (PLP), the active form of vitamin B6. The polypeptide is Pyridoxal phosphate homeostasis protein (Pongo abelii (Sumatran orangutan)).